Consider the following 132-residue polypeptide: Small ribosomal subunit protein bS6 (132 aa).

Belongs to the bacterial ribosomal protein bS6 family.

Binds together with bS18 to 16S ribosomal RNA. The protein is Small ribosomal subunit protein bS6 of Chlorobium chlorochromatii (strain CaD3).